A 155-amino-acid polypeptide reads, in one-letter code: MEEIQQQTQKEEQKHREEEEEEEEGPPPGWESAVLPPPIVTITAAVNPNPTTVEIPEKAQMVCGSCRRLLSYLRGSKHVKCSSCQTVNLVLEANQVGQVNCNNCKLLLMYPYGAPAVRCSSCNSVTDISENNKRPPWSEQQGPLKSLSSLRRAEN.

At Met-1 the chain carries N-acetylmethionine. The interval 1-35 (MEEIQQQTQKEEQKHREEEEEEEEGPPPGWESAVL) is disordered. 2 putative zinc finger regions span residues 60-90 (QMVC…VNLV) and 98-128 (QVNC…VTDI). The disordered stretch occupies residues 130 to 155 (ENNKRPPWSEQQGPLKSLSSLRRAEN). The span at 138–149 (SEQQGPLKSLSS) shows a compositional bias: polar residues.

It localises to the nucleus. Putative zinc finger that may be involved in programmed cell death and defense response. This Arabidopsis thaliana (Mouse-ear cress) protein is Protein LOL2 (LOL2).